We begin with the raw amino-acid sequence, 1595 residues long: Pentafunctional AROM polypeptide (1595 aa).

The 3-dehydroquinate synthase stretch occupies residues Met-1 to Asn-384. NAD(+) is bound by residues Asp-44–Asn-46, Glu-81–Lys-84, Gly-114–Val-116, and Asp-119. Arg-130 provides a ligand contact to 7-phospho-2-dehydro-3-deoxy-D-arabino-heptonate. Thr-139 to Thr-140 serves as a coordination point for NAD(+). Residues Asp-146 and Lys-152 each contribute to the 7-phospho-2-dehydro-3-deoxy-D-arabino-heptonate site. Lys-161 lines the NAD(+) pocket. Asn-162 serves as a coordination point for 7-phospho-2-dehydro-3-deoxy-D-arabino-heptonate. NAD(+) contacts are provided by residues Phe-179–Thr-182 and Asn-190. Glu-194 is a binding site for Zn(2+). 7-phospho-2-dehydro-3-deoxy-D-arabino-heptonate is bound by residues Glu-194–Lys-197 and Lys-250. Catalysis depends on Glu-260, which acts as the Proton acceptor; for 3-dehydroquinate synthase activity. Residues Arg-264–Asn-268 and His-271 contribute to the 7-phospho-2-dehydro-3-deoxy-D-arabino-heptonate site. His-271 lines the Zn(2+) pocket. The active-site Proton acceptor; for 3-dehydroquinate synthase activity is the His-275. The 7-phospho-2-dehydro-3-deoxy-D-arabino-heptonate site is built by His-287 and Lys-356. A Zn(2+)-binding site is contributed by His-287. Positions Val-397 to Val-842 are EPSP synthase. Cys-824 serves as the catalytic For EPSP synthase activity. The tract at residues Ala-866 to Ser-1057 is shikimate kinase. ATP is bound at residue Gly-872–Thr-879. The tract at residues Leu-1058 to Glu-1278 is 3-dehydroquinase. His-1181 acts as the Proton acceptor; for 3-dehydroquinate dehydratase activity in catalysis. The active-site Schiff-base intermediate with substrate; for 3-dehydroquinate dehydratase activity is the Lys-1209. A shikimate dehydrogenase region spans residues Ala-1291–Leu-1595.

This sequence in the N-terminal section; belongs to the sugar phosphate cyclases superfamily. Dehydroquinate synthase family. In the 2nd section; belongs to the EPSP synthase family. It in the 3rd section; belongs to the shikimate kinase family. The protein in the 4th section; belongs to the type-I 3-dehydroquinase family. This sequence in the C-terminal section; belongs to the shikimate dehydrogenase family. In terms of assembly, homodimer. The cofactor is Zn(2+).

It localises to the cytoplasm. The catalysed reaction is 7-phospho-2-dehydro-3-deoxy-D-arabino-heptonate = 3-dehydroquinate + phosphate. It carries out the reaction 3-dehydroquinate = 3-dehydroshikimate + H2O. It catalyses the reaction shikimate + NADP(+) = 3-dehydroshikimate + NADPH + H(+). The enzyme catalyses shikimate + ATP = 3-phosphoshikimate + ADP + H(+). The catalysed reaction is 3-phosphoshikimate + phosphoenolpyruvate = 5-O-(1-carboxyvinyl)-3-phosphoshikimate + phosphate. The protein operates within metabolic intermediate biosynthesis; chorismate biosynthesis; chorismate from D-erythrose 4-phosphate and phosphoenolpyruvate: step 2/7. Its pathway is metabolic intermediate biosynthesis; chorismate biosynthesis; chorismate from D-erythrose 4-phosphate and phosphoenolpyruvate: step 3/7. It functions in the pathway metabolic intermediate biosynthesis; chorismate biosynthesis; chorismate from D-erythrose 4-phosphate and phosphoenolpyruvate: step 4/7. It participates in metabolic intermediate biosynthesis; chorismate biosynthesis; chorismate from D-erythrose 4-phosphate and phosphoenolpyruvate: step 5/7. The protein operates within metabolic intermediate biosynthesis; chorismate biosynthesis; chorismate from D-erythrose 4-phosphate and phosphoenolpyruvate: step 6/7. Its function is as follows. The AROM polypeptide catalyzes 5 consecutive enzymatic reactions in prechorismate polyaromatic amino acid biosynthesis. In Ajellomyces capsulatus (strain G186AR / H82 / ATCC MYA-2454 / RMSCC 2432) (Darling's disease fungus), this protein is Pentafunctional AROM polypeptide.